Here is a 346-residue protein sequence, read N- to C-terminus: Uroporphyrinogen decarboxylase (346 aa).

Substrate-binding positions include 26 to 30 (RQAGR), Asp-76, Tyr-153, Ser-208, and His-323.

The protein belongs to the uroporphyrinogen decarboxylase family. Homodimer.

The protein localises to the cytoplasm. The catalysed reaction is uroporphyrinogen III + 4 H(+) = coproporphyrinogen III + 4 CO2. It functions in the pathway porphyrin-containing compound metabolism; protoporphyrin-IX biosynthesis; coproporphyrinogen-III from 5-aminolevulinate: step 4/4. Functionally, catalyzes the decarboxylation of four acetate groups of uroporphyrinogen-III to yield coproporphyrinogen-III. This is Uroporphyrinogen decarboxylase from Prochlorococcus marinus (strain AS9601).